The primary structure comprises 215 residues: Octanoyltransferase (215 aa).

The 177-residue stretch at 33-209 (PDTPDQLWLV…QFARKLGYET (177 aa)) folds into the BPL/LPL catalytic domain. Residues 72–79 (RGGQVTYH), 139–141 (SLG), and 152–154 (GLA) contribute to the substrate site. Residue Cys-170 is the Acyl-thioester intermediate of the active site.

The protein belongs to the LipB family.

Its subcellular location is the cytoplasm. The enzyme catalyses octanoyl-[ACP] + L-lysyl-[protein] = N(6)-octanoyl-L-lysyl-[protein] + holo-[ACP] + H(+). Its pathway is protein modification; protein lipoylation via endogenous pathway; protein N(6)-(lipoyl)lysine from octanoyl-[acyl-carrier-protein]: step 1/2. Its function is as follows. Catalyzes the transfer of endogenously produced octanoic acid from octanoyl-acyl-carrier-protein onto the lipoyl domains of lipoate-dependent enzymes. Lipoyl-ACP can also act as a substrate although octanoyl-ACP is likely to be the physiological substrate. The sequence is that of Octanoyltransferase from Cellvibrio japonicus (strain Ueda107) (Pseudomonas fluorescens subsp. cellulosa).